A 98-amino-acid polypeptide reads, in one-letter code: MKSITVICFLALCTVAITSAYPQEPVLADEARPFANSLFDELPEETYQAAVENFRLKRATCDLLSGFGVGDSACAAHCIARGNRGGYCNSKKVCVCRN.

Residues 1-18 form the signal peptide; the sequence is MKSITVICFLALCTVAIT. A propeptide spanning residues 19–58 is cleaved from the precursor; sequence SAYPQEPVLADEARPFANSLFDELPEETYQAAVENFRLKR. 3 cysteine pairs are disulfide-bonded: cysteine 61/cysteine 88, cysteine 74/cysteine 94, and cysteine 78/cysteine 96.

Belongs to the invertebrate defensin family. Type 1 subfamily.

It is found in the secreted. Its function is as follows. Antibacterial peptide mostly active against Gram-positive bacteria. Has activity against the bacteria Gram-negative E.cloacae beta12. This Aedes aegypti (Yellowfever mosquito) protein is Defensin-A (DEFA).